The following is a 252-amino-acid chain: Large ribosomal subunit protein uL4 (252 aa).

It belongs to the universal ribosomal protein uL4 family. As to quaternary structure, part of the 50S ribosomal subunit.

In terms of biological role, one of the primary rRNA binding proteins, this protein initially binds near the 5'-end of the 23S rRNA. It is important during the early stages of 50S assembly. It makes multiple contacts with different domains of the 23S rRNA in the assembled 50S subunit and ribosome. Its function is as follows. Forms part of the polypeptide exit tunnel. This is Large ribosomal subunit protein uL4 from Methanocaldococcus jannaschii (strain ATCC 43067 / DSM 2661 / JAL-1 / JCM 10045 / NBRC 100440) (Methanococcus jannaschii).